A 473-amino-acid chain; its full sequence is Ribulose bisphosphate carboxylase large chain (473 aa).

Substrate-binding residues include Asn-116 and Thr-166. Lys-168 acts as the Proton acceptor in catalysis. Lys-170 is a binding site for substrate. 3 residues coordinate Mg(2+): Lys-194, Asp-196, and Glu-197. Residue Lys-194 is modified to N6-carboxylysine. The active-site Proton acceptor is His-287. Positions 288, 320, and 372 each coordinate substrate.

The protein belongs to the RuBisCO large chain family. Type I subfamily. In terms of assembly, heterohexadecamer of 8 large chains and 8 small chains. Mg(2+) is required as a cofactor.

It catalyses the reaction 2 (2R)-3-phosphoglycerate + 2 H(+) = D-ribulose 1,5-bisphosphate + CO2 + H2O. It carries out the reaction D-ribulose 1,5-bisphosphate + O2 = 2-phosphoglycolate + (2R)-3-phosphoglycerate + 2 H(+). Its function is as follows. RuBisCO catalyzes two reactions: the carboxylation of D-ribulose 1,5-bisphosphate, the primary event in carbon dioxide fixation, as well as the oxidative fragmentation of the pentose substrate. Both reactions occur simultaneously and in competition at the same active site. This is Ribulose bisphosphate carboxylase large chain from Halorhodospira halophila (strain DSM 244 / SL1) (Ectothiorhodospira halophila (strain DSM 244 / SL1)).